A 619-amino-acid chain; its full sequence is Chaperone protein HscA homolog (619 aa).

Belongs to the heat shock protein 70 family.

Functionally, chaperone involved in the maturation of iron-sulfur cluster-containing proteins. Has a low intrinsic ATPase activity which is markedly stimulated by HscB. The protein is Chaperone protein HscA homolog of Acinetobacter baumannii (strain ATCC 17978 / DSM 105126 / CIP 53.77 / LMG 1025 / NCDC KC755 / 5377).